Here is a 500-residue protein sequence, read N- to C-terminus: Cysteine--tRNA ligase (500 aa).

Cysteine 29 contributes to the Zn(2+) binding site. The 'HIGH' region signature appears at 31 to 41 (VTVYDLCHLGH). 3 residues coordinate Zn(2+): cysteine 213, histidine 238, and glutamate 242. The 'KMSKS' region motif lies at 270 to 274 (KMSKS). Lysine 273 contributes to the ATP binding site.

This sequence belongs to the class-I aminoacyl-tRNA synthetase family. In terms of assembly, monomer. Requires Zn(2+) as cofactor.

The protein localises to the cytoplasm. It catalyses the reaction tRNA(Cys) + L-cysteine + ATP = L-cysteinyl-tRNA(Cys) + AMP + diphosphate. This is Cysteine--tRNA ligase from Prochlorococcus marinus (strain NATL1A).